The chain runs to 258 residues: Indole-3-glycerol phosphate synthase (258 aa).

The protein belongs to the TrpC family.

The catalysed reaction is 1-(2-carboxyphenylamino)-1-deoxy-D-ribulose 5-phosphate + H(+) = (1S,2R)-1-C-(indol-3-yl)glycerol 3-phosphate + CO2 + H2O. The protein operates within amino-acid biosynthesis; L-tryptophan biosynthesis; L-tryptophan from chorismate: step 4/5. This Exiguobacterium sibiricum (strain DSM 17290 / CCUG 55495 / CIP 109462 / JCM 13490 / 255-15) protein is Indole-3-glycerol phosphate synthase.